The sequence spans 401 residues: Probable E3 ubiquitin-protein ligase RHC2A (401 aa).

The tract at residues 41–93 (TPSDSFTTTTTTQHRSPTRFPPPSSSSSTPSASMHADNSPTPTIVTRTRSNRS) is disordered. The span at 76–93 (ADNSPTPTIVTRTRSNRS) shows a compositional bias: polar residues. The RING-type; atypical zinc finger occupies 201-242 (CAVCKENFVLKSSAREMPCNHIYHPDCILPWLAIRNSCPVCR).

It carries out the reaction S-ubiquitinyl-[E2 ubiquitin-conjugating enzyme]-L-cysteine + [acceptor protein]-L-lysine = [E2 ubiquitin-conjugating enzyme]-L-cysteine + N(6)-ubiquitinyl-[acceptor protein]-L-lysine.. Its pathway is protein modification; protein ubiquitination. Its function is as follows. Probable E3 ubiquitin-protein ligase that may possess E3 ubiquitin ligase activity in vitro. This Arabidopsis thaliana (Mouse-ear cress) protein is Probable E3 ubiquitin-protein ligase RHC2A.